A 488-amino-acid chain; its full sequence is MIQGTTSDAGKSTLVAGLCRLARRAGARVAPFKPQNMALNSAVTADGGEIGRAQALQALAAGVAPHTDFNPVLLKPTSDRGAQVIIHGKARMNLDARAYHDYKPVAFDAVLESYARLRAGYDTVLVEGAGSPAEINLREGDIANMGFAERVDCPVVLVADIDRGGVFAHLVGTLACLSDSERARVRGFVINRFRGDIKLLEPGLDWLRAQTGKPVFGVLPYLHGLLLDAEDMLPSQARSAAARGDAGVLRVVVPALPRISNHTDFDPLRAHPQVEFTYWKSGPVPDADLLILPGSKSVQRDLAWLRDAGWDAVIRRHLRYGGKVIGICGGMQMLGRTLDDPLGLEGAPASVPGLGLLDFDTTLQPDKTLKNVTGHLALPGAAAVHGYEIHMGDTRGPALAAPALTLAAGDASGGVRPDGAVSADGQILATYVHGLFDAPDACAVLLAWAGLDGAERIDYPALREASLERLADSFAEHLDLRALYAEFR.

The 194-residue stretch at 248–441 (VLRVVVPALP…VHGLFDAPDA (194 aa)) folds into the GATase cobBQ-type domain. C328 acts as the Nucleophile in catalysis. H433 is a catalytic residue.

Belongs to the CobB/CobQ family. CobQ subfamily.

The protein operates within cofactor biosynthesis; adenosylcobalamin biosynthesis. Catalyzes amidations at positions B, D, E, and G on adenosylcobyrinic A,C-diamide. NH(2) groups are provided by glutamine, and one molecule of ATP is hydrogenolyzed for each amidation. This is Cobyric acid synthase from Burkholderia ambifaria (strain ATCC BAA-244 / DSM 16087 / CCUG 44356 / LMG 19182 / AMMD) (Burkholderia cepacia (strain AMMD)).